A 529-amino-acid chain; its full sequence is uncharacterized protein (529 aa).

The segment at 1 to 20 (MGADLKQPQDADSPPKGVSR) is disordered. Positions 1-52 (MGADLKQPQDADSPPKGVSRRRFLTTGAAAVVGTGVGAGGTALLSSHPRGPA) form a signal peptide, tat-type signal.

In terms of processing, predicted to be exported by the Tat system. The position of the signal peptide cleavage has not been experimentally proven.

This is an uncharacterized protein from Mycobacterium tuberculosis (strain CDC 1551 / Oshkosh).